The chain runs to 553 residues: Urocanate hydratase (553 aa).

Residues Gly-45 to Gly-46, Gln-123, Gly-169 to Gly-171, Asp-189, Arg-194, Asn-235 to Ala-236, Gln-256 to His-260, Tyr-266 to Val-267, Tyr-315, and Gly-485 contribute to the NAD(+) site.

The protein belongs to the urocanase family. NAD(+) is required as a cofactor.

The protein localises to the cytoplasm. The catalysed reaction is 4-imidazolone-5-propanoate = trans-urocanate + H2O. The protein operates within amino-acid degradation; L-histidine degradation into L-glutamate; N-formimidoyl-L-glutamate from L-histidine: step 2/3. Its function is as follows. Catalyzes the conversion of urocanate to 4-imidazolone-5-propionate. In Staphylococcus aureus (strain MRSA252), this protein is Urocanate hydratase.